Here is a 62-residue protein sequence, read N- to C-terminus: Large ribosomal subunit protein bL28 (62 aa).

This sequence belongs to the bacterial ribosomal protein bL28 family.

In Streptococcus mutans serotype c (strain ATCC 700610 / UA159), this protein is Large ribosomal subunit protein bL28.